A 312-amino-acid polypeptide reads, in one-letter code: Glycine--tRNA ligase alpha subunit (312 aa).

The protein belongs to the class-II aminoacyl-tRNA synthetase family. In terms of assembly, tetramer of two alpha and two beta subunits.

It is found in the cytoplasm. The catalysed reaction is tRNA(Gly) + glycine + ATP = glycyl-tRNA(Gly) + AMP + diphosphate. The sequence is that of Glycine--tRNA ligase alpha subunit (glyQ) from Buchnera aphidicola subsp. Acyrthosiphon pisum (strain APS) (Acyrthosiphon pisum symbiotic bacterium).